A 623-amino-acid polypeptide reads, in one-letter code: MAWGCFVVLLLLAAAPLRLGQRLHLEPGFEYSYDCGVRGMQLLVFPRPNQTVQFKVLDEFGNRFEVNNCSICYHWVTSEAQEHTVFSADYKGCHVLEKDGRFHLRVFIQAVLPNGRVDIAQDVTLICPKPDHTVTPDPYLAPPTTPEPFTPHAFALHPIPDHTLAGSGHTGLTTLYPEQSFIHPTPAPPSLGPGPAGSTVPHSQWGTLEPWELTELDSVGTHLPQERCQVASGHIPCMVNGSSKETCQQAGCCYDSTKEEPCYYGNTVTLQCFKSGYFTLVMSQETALTHGVLLDNVHLAYAPNGCPPTQKTSAFVVFHVPLTLCGTAIQVVGEQLIYENQLVSDIDVQKGPQGSITRDSAFRLHVRCIFNASDFLPIQASIFSPQPPAPVTQSGPLRLELRIATDKTFSSYYQGSDYPLVRLLREPVYVEVRLLQRTDPSLVLVLHQCWATPTTSPFEQPQWPILSDGCPFKGDNYRTQVVAADREALPFWSHYQRFTITTFMLLDSSSQNALRGQVYFFCSASACHPLGSDTCSTTCDSGIARRRRSSGHHNITLRALDIVSSPGAVGFEDAAKLEPSGSSRNSSSRMLLLLLAITLALAAGIFVGLIWAWAQKLWEGIRY.

The first 20 residues, 1-20 (MAWGCFVVLLLLAAAPLRLG), serve as a signal peptide directing secretion. Gln-21 carries the post-translational modification Pyrrolidone carboxylic acid. The Extracellular portion of the chain corresponds to 21-590 (QRLHLEPGFE…GSSRNSSSRM (570 aa)). N-linked (GlcNAc...) asparagine glycans are attached at residues Asn-49 and Asn-68. The segment at 182–201 (IHPTPAPPSLGPGPAGSTVP) is disordered. In terms of domain architecture, P-type spans 226-266 (ERCQVASGHIPCMVNGSSKETCQQAGCCYDSTKEEPCYYGN). 3 disulfide bridges follow: Cys-228/Cys-253, Cys-237/Cys-252, and Cys-247/Cys-262. A glycan (N-linked (GlcNAc...) asparagine) is linked at Asn-240. A ZP domain is found at 271–542 (QCFKSGYFTL…DTCSTTCDSG (272 aa)). N-linked (GlcNAc...) asparagine glycosylation is present at Asn-371. A disulfide bond links Cys-449 and Cys-470. Positions 547–623 (RRSSGHHNIT…AQKLWEGIRY (77 aa)) are cleaved as a propeptide — removed in mature form. Asn-554 and Asn-585 each carry an N-linked (GlcNAc...) asparagine glycan. A helical transmembrane segment spans residues 591–611 (LLLLLAITLALAAGIFVGLIW). The Cytoplasmic segment spans residues 612 to 623 (AWAQKLWEGIRY).

Belongs to the ZP domain family. ZPB subfamily. Polymers of ZP2 and ZP3 organized into long filaments cross-linked by ZP1 homodimers. Interacts with ZP3. Proteolytically cleaved before the transmembrane segment to yield the secreted ectodomain incorporated in the zona pellucida. Post-translationally, O-glycosylated. As to expression, expressed in oocytes.

The protein resides in the zona pellucida. Its subcellular location is the cell membrane. Its function is as follows. Component of the zona pellucida, an extracellular matrix surrounding oocytes which mediates sperm binding, induction of the acrosome reaction and prevents post-fertilization polyspermy. The zona pellucida is composed of 3 to 4 glycoproteins, ZP1, ZP2, ZP3, and ZP4. ZP1 ensures the structural integrity of the zona pellucida. This chain is Zona pellucida sperm-binding protein 1 (Zp1), found in Mus musculus (Mouse).